A 416-amino-acid polypeptide reads, in one-letter code: Squalene synthase (416 aa).

NADP(+)-binding residues include Arg52 and Arg77. Positions 80, 83, and 84 each coordinate Mg(2+). Arg218 is an NADP(+) binding site. The chain crosses the membrane as a helical span at residues 284 to 304 (SVFNFCAIPQVMAIATLAACY). 2 residues coordinate NADP(+): Lys315 and Arg317. The chain crosses the membrane as a helical span at residues 384–404 (PIYLSFIMLLAALSWQYLSTL).

The protein belongs to the phytoene/squalene synthase family. It depends on Mg(2+) as a cofactor.

It localises to the endoplasmic reticulum membrane. It catalyses the reaction 2 (2E,6E)-farnesyl diphosphate + NADPH + H(+) = squalene + 2 diphosphate + NADP(+). The catalysed reaction is 2 (2E,6E)-farnesyl diphosphate + NADH + H(+) = squalene + 2 diphosphate + NAD(+). It carries out the reaction presqualene diphosphate + NADH + H(+) = squalene + diphosphate + NAD(+). The enzyme catalyses presqualene diphosphate + NADPH + H(+) = squalene + diphosphate + NADP(+). It catalyses the reaction 2 (2E,6E)-farnesyl diphosphate = presqualene diphosphate + diphosphate. Its pathway is terpene metabolism; lanosterol biosynthesis; lanosterol from farnesyl diphosphate: step 1/3. Functionally, catalyzes the condensation of 2 farnesyl pyrophosphate (FPP) moieties to form squalene. Proceeds in two distinct steps. In the first half-reaction, two molecules of FPP react to form the stable presqualene diphosphate intermediate (PSQPP), with concomitant release of a proton and a molecule of inorganic diphosphate. In the second half-reaction, PSQPP undergoes heterolysis, isomerization, and reduction with NADPH or NADH to form squalene. It is the first committed enzyme of the sterol biosynthesis pathway. The protein is Squalene synthase (Fdft1) of Mus musculus (Mouse).